Reading from the N-terminus, the 308-residue chain is Formamidopyrimidine-DNA glycosylase (308 aa).

Pro2 (schiff-base intermediate with DNA) is an active-site residue. Glu3 acts as the Proton donor in catalysis. Lys61 serves as the catalytic Proton donor; for beta-elimination activity. 3 residues coordinate DNA: His100, Arg120, and Arg181. The FPG-type zinc finger occupies 267–301 (AVYGQEGRPCPRCGALVRRDAFMNRSSFSCPVCQP). Arg291 acts as the Proton donor; for delta-elimination activity in catalysis.

Belongs to the FPG family. In terms of assembly, monomer. Zn(2+) serves as cofactor.

The catalysed reaction is Hydrolysis of DNA containing ring-opened 7-methylguanine residues, releasing 2,6-diamino-4-hydroxy-5-(N-methyl)formamidopyrimidine.. It catalyses the reaction 2'-deoxyribonucleotide-(2'-deoxyribose 5'-phosphate)-2'-deoxyribonucleotide-DNA = a 3'-end 2'-deoxyribonucleotide-(2,3-dehydro-2,3-deoxyribose 5'-phosphate)-DNA + a 5'-end 5'-phospho-2'-deoxyribonucleoside-DNA + H(+). Involved in base excision repair of DNA damaged by oxidation or by mutagenic agents. Acts as a DNA glycosylase that recognizes and removes damaged bases. Has a preference for oxidized purines, such as 7,8-dihydro-8-oxoguanine (8-oxoG). Has AP (apurinic/apyrimidinic) lyase activity and introduces nicks in the DNA strand. Cleaves the DNA backbone by beta-delta elimination to generate a single-strand break at the site of the removed base with both 3'- and 5'-phosphates. In Kineococcus radiotolerans (strain ATCC BAA-149 / DSM 14245 / SRS30216), this protein is Formamidopyrimidine-DNA glycosylase.